Consider the following 206-residue polypeptide: GTP-binding protein YPT1 (206 aa).

At Met-1 the chain carries N-acetylmethionine. GTP contacts are provided by residues 17–23 (SGVGKSC), 33–40 (YTNDYIST), Gly-66, and 121–124 (NKCD). Cys-23 is lipidated: S-palmitoyl cysteine. Residues 37 to 45 (YISTIGVDF) carry the Effector region motif. The interaction with GDI1 stretch occupies residues 63–80 (DTAGQERFRTITSSYYRG). Residue Cys-123 is the site of S-palmitoyl cysteine attachment. Lys-144 is covalently cross-linked (Glycyl lysine isopeptide (Lys-Gly) (interchain with G-Cter in ubiquitin)). Residue 152–153 (AL) coordinates GTP. A phosphoserine mark is found at Ser-172 and Ser-174. Residues 173–206 (MSQQNLNETTQKKEDKGNVNLKGQSLTNTGGGCC) are disordered. The segment at 189 to 195 (GNVNLKG) is interaction with GDI1. S-geranylgeranyl cysteine attachment occurs at residues Cys-205 and Cys-206.

It belongs to the small GTPase superfamily. Rab family. As to quaternary structure, forms a complex with the Rab escort protein (REP) MRS6, which is recognized by Rab geranylgeranyltransferase BET2-BET4. Interacts with the Rab GDP dissociation inhibitor GDI1, which can retrieve from and deliver to membranes the GDP-bound and prenylated form of YPT1. Interacts with YIP1, which is required for proper membrane targeting of prenylated YPT1. Interacts with YIF1, YIP3, YIP4 and YIP5. Prenylation is required for interaction with GDI1 and YIP1.

It localises to the endoplasmic reticulum membrane. The protein resides in the golgi apparatus membrane. It is found in the cytoplasm. Its subcellular location is the preautophagosomal structure membrane. Its activity is regulated as follows. Rab activation is generally mediated by a guanine exchange factor (GEF), while inactivation through hydrolysis of bound GTP is catalyzed by a GTPase activating protein (GAP). YPT1 is activated by the GEFs DSS4 and TRAPP complex, and inactivated by GAPs GYP1, GYP5 and GYP8. In terms of biological role, the small GTPases Rab are key regulators of intracellular membrane trafficking, from the formation of transport vesicles to their fusion with membranes. Rabs cycle between an inactive GDP-bound form and an active GTP-bound form that is able to recruit to membranes different set of downstream effectors directly responsible for vesicle formation, movement, tethering and fusion. YPT1 regulates the trafficking of secretory vesicles from the endoplasmic reticulum (ER) to the Golgi. Vesicular transport depends on shuttling of YPT1 between membrane and cytosol by GDI1, probably by recycling it to its membrane of origin after a vesicle fusion event. Plays a role in the initial events of the autophagic vacuole development which take place at specialized regions of the endoplasmic reticulum. Also involved in the recycling of membrane proteins. The protein is GTP-binding protein YPT1 (YPT1) of Saccharomyces cerevisiae (strain ATCC 204508 / S288c) (Baker's yeast).